A 35-amino-acid chain; its full sequence is Dermonecrotic toxin LdSicTox-alpha-1 (35 aa).

His11 is an active-site residue. The Mg(2+) site is built by Glu31 and Asp33.

It belongs to the arthropod phospholipase D family. Class I subfamily. Mg(2+) is required as a cofactor. In terms of processing, contains 1 disulfide bond. As to expression, expressed by the venom gland.

It localises to the secreted. It carries out the reaction an N-(acyl)-sphingosylphosphocholine = an N-(acyl)-sphingosyl-1,3-cyclic phosphate + choline. The catalysed reaction is an N-(acyl)-sphingosylphosphoethanolamine = an N-(acyl)-sphingosyl-1,3-cyclic phosphate + ethanolamine. It catalyses the reaction a 1-acyl-sn-glycero-3-phosphocholine = a 1-acyl-sn-glycero-2,3-cyclic phosphate + choline. The enzyme catalyses a 1-acyl-sn-glycero-3-phosphoethanolamine = a 1-acyl-sn-glycero-2,3-cyclic phosphate + ethanolamine. Dermonecrotic toxins cleave the phosphodiester linkage between the phosphate and headgroup of certain phospholipids (sphingolipid and lysolipid substrates), forming an alcohol (often choline) and a cyclic phosphate. This toxin acts on sphingomyelin (SM). It may also act on ceramide phosphoethanolamine (CPE), lysophosphatidylcholine (LPC) and lysophosphatidylethanolamine (LPE), but not on lysophosphatidylserine (LPS), and lysophosphatidylglycerol (LPG). It acts by transphosphatidylation, releasing exclusively cyclic phosphate products as second products. Induces dermonecrosis, hemolysis, increased vascular permeability, edema, inflammatory response, and platelet aggregation. This is Dermonecrotic toxin LdSicTox-alpha-1 from Loxosceles deserta (Desert recluse spider).